The following is a 1093-amino-acid chain: Protein AF-17 (1093 aa).

The segment at 5 to 57 adopts a PHD-type 1 zinc-finger fold; it reads VGGCCVCSDERGWAENPLVYCDGHACSVAVHQACYGIVQVPTGPWFCRKCESQ. A C2HC pre-PHD-type zinc finger spans residues 62-95; that stretch reads RVRCELCPHKDGALKRTDNGGWAHVVCALYIPEV. A PHD-type 2 zinc finger spans residues 118 to 181; that stretch reads KTCYICEEQG…KYCGYCKYHF (64 aa). Residues 185-500 are disordered; sequence KTSRHSSGGG…GGPAAPSLPS (316 aa). The span at 191 to 212 shows a compositional bias: gly residues; the sequence is SGGGGGGAGGGGGSMGGGGSGF. Residues 231 to 255 show a composition bias toward basic residues; it reads PTHHERGQKKSRKDKERLKQKHKKR. At Ser-258 the chain carries Phosphoserine. Over residues 258-268 the composition is skewed to pro residues; that stretch reads SPPSILTPPVV. The segment covering 282–300 has biased composition (basic and acidic residues); the sequence is SHHEASTQETSESSRESKG. Positions 301-316 are enriched in basic residues; that stretch reads KKSSSHSLSHKGKKLS. The segment covering 317-340 has biased composition (low complexity); the sequence is SGKGVSSFTSASSSSSSSSSSSGG. Residues 345–354 are compositionally biased toward polar residues; the sequence is AVSSLQSSPD. Residues 374–388 are compositionally biased toward pro residues; it reads APAPSAPPSPSAPEP. Residues Ser-378 and Ser-423 each carry the phosphoserine modification. Residues 410-425 are compositionally biased toward low complexity; the sequence is STTTSSSGRARAPSPG. The residue at position 451 (Thr-451) is a Phosphothreonine. Positions 465-484 are enriched in basic residues; sequence EKKHKASKRSRHGPGRPKGS. Residues 729 to 764 are leucine-zipper; the sequence is LQKENQRLQEQILSLTAKKERLQILNVQLSVPFPAL. Disordered stretches follow at residues 775–871 and 1060–1093; these read VPGP…RAPG and QTNPFLSLSGAEGSGGGPKGGTADKGASANQEKG. The span at 787–796 shows a compositional bias: low complexity; sequence SSDSLSTSKS. Residues 804-813 are compositionally biased toward polar residues; the sequence is GLDNSLSTSS. 2 stretches are compositionally biased toward low complexity: residues 818–832 and 839–853; these read SGCPSRSSSSLSFHS and LLQQSPATLPLALPG.

Interacts with histone H3; interaction is necessary for MLLT6 binding to nucleosomes; interaction is inhibited by histone H3 'Lys-27' methylations (H3K27me1, H3K27me2 and H3K27me3).

It is found in the nucleus. This chain is Protein AF-17 (MLLT6), found in Homo sapiens (Human).